Here is a 628-residue protein sequence, read N- to C-terminus: Chaperone protein HtpG (628 aa).

The interval 1–333 is a; substrate-binding; it reads MTTDTKATET…SADLPLNVSR (333 aa). The b stretch occupies residues 334–549; sequence EMIQESPLLA…EHGPDRQFER (216 aa). The interval 550–628 is c; it reads LMNAAGRLDK…RLIARGIAKG (79 aa).

It belongs to the heat shock protein 90 family. In terms of assembly, homodimer.

It is found in the cytoplasm. Functionally, molecular chaperone. Has ATPase activity. This is Chaperone protein HtpG from Mesorhizobium japonicum (strain LMG 29417 / CECT 9101 / MAFF 303099) (Mesorhizobium loti (strain MAFF 303099)).